A 909-amino-acid polypeptide reads, in one-letter code: MRSPARDATRLGRLATWVVAVIVALIAVSRVTGLVVDWMWFASVGYAGVFRTIFLTQALLFLAVFAVSAGALWLSGWLAHRSASQAQAWRPEVLGQPVGEIAARVPWRAAIAGVAVLVGLLMAVGELSSWAIALRYFHQVPFGKTDPIFAKDIGFYFFTLPAYLALRNWLLLLLGCSAVLAGVVYGLRGDIALVRSPRGLSPAAATHGSALLGLFFALQAWSYWLDRFMLLYGDNGVVVGASYTDVHVGLPVLWLQVGLAAAAAAASWANMRWRDYRVPAAAALLVVGSAIVLGTIWPALFQRFYVKPNELQLETPYLQHNIALTREAYGLTQIEVKPFPVEQNLNLAALQANRPTIDNIRLWDLQPLRDTYAQLQEIRTYYKFLATDIDRYQLGAGYQQVMLSARELEPALIPANAQTWVNLHLLFTHGNGVVMSPVTEKSAEGLPSLYLHDIPPLSDGGPVIQEPRLYFGEGGKGYVIVKGSVPEFDYPKGKDNVYTAYRGRDGIGIGGIARRTLFAWHLGDPNILLSGYITQESRILLHRNIRNRVRTIAPFLSLDHDPYVVVSDGRLYWIQDAYTTSRWFPYSQPGTGGGANYIRNAVKVVIDAYNGTVDFYTSDPADPIVQVYQRIFPGMFRPLGAMSQDLQRHIRYPEDLFLIQARIYRAYHMEAAEVFYNREDLWEFPRQLTGMSTGNTPAARMMPYYMILRLPDEPRAEFVLMLPMVPSQRENMIAWLAARSDPPNYGKLVAYTFPKEKLVYGPFQIEARIQQNTEISQQISLWNQMGSRVIRGHLQVVPIENSILYVSPLYLRAESGQLPELKRVIAAYGDRVVMEDTLGAALAALFKESAPAAIPAQGAANARAREALAHYDRAVERLKAGDWSGFGAELDALRPLLEALGAGAADERK.

The next 7 membrane-spanning stretches (helical) occupy residues 16–36 (TWVV…GLVV), 58–78 (ALLF…SGWL), 114–134 (VAVL…AIAL), 169–189 (WLLL…GLRG), 205–225 (ATHG…SYWL), 246–266 (VHVG…AAAA), and 281–301 (AAAL…PALF).

The protein belongs to the UPF0182 family.

Its subcellular location is the cell membrane. This Cupriavidus necator (strain ATCC 17699 / DSM 428 / KCTC 22496 / NCIMB 10442 / H16 / Stanier 337) (Ralstonia eutropha) protein is UPF0182 protein H16_A1615.